The following is a 111-amino-acid chain: Translation initiation factor 1A (111 aa).

The span at 1–13 (MKKSNNKNNHKNN) shows a compositional bias: basic residues. The disordered stretch occupies residues 1–30 (MKKSNNKNNHKNNHNNNQGGENIRVRSPRR). Residues 23-96 (IRVRSPRRGE…EKADVIWRYT (74 aa)) enclose the S1-like domain.

This sequence belongs to the eIF-1A family.

Seems to be required for maximal rate of protein biosynthesis. Enhances ribosome dissociation into subunits and stabilizes the binding of the initiator Met-tRNA(I) to 40 S ribosomal subunits. This chain is Translation initiation factor 1A, found in Methanosphaera stadtmanae (strain ATCC 43021 / DSM 3091 / JCM 11832 / MCB-3).